The chain runs to 1860 residues: Proprotein convertase subtilisin/kexin type 5 (1860 aa).

Positions 1–32 (MGWGSRCCCPGRLDLLCVLALLGGCLLPVCRT) are cleaved as a signal peptide. Positions 33-114 (RVYTNHWAVK…QQVVKKRTKR (82 aa)) are excised as a propeptide. At 115-1743 (DYDFSRAQST…VRPATEHFKT (1629 aa)) the chain is on the extracellular side. One can recognise a Peptidase S8 domain in the interval 134–453 (MWYMHCSDNT…FGLMDAEAMV (320 aa)). Active-site charge relay system residues include Asp-171 and His-212. Asn-225 and Asn-381 each carry an N-linked (GlcNAc...) asparagine glycan. Ser-386 (charge relay system) is an active-site residue. The region spanning 461 to 601 (TVPRQHVCVE…SLVLYGTSVQ (141 aa)) is the P/Homo B domain. Positions 519 to 521 (RGD) match the Cell attachment site motif. 22 FU repeats span residues 630-680 (EDYA…GHYH), 683-730 (KKRC…GSYQ), 734-777 (KNLC…GRYF), 779-824 (GQDC…SYYF), 832-879 (YKSC…GEYV), 882-927 (HGHC…WKFE), 929-979 (ENQC…GHYA), 982-1028 (GNTC…GEVQ), 1032-1077 (YEEC…KTYS), 1079-1121 (EVEC…GFYG), 1125-1168 (MGEC…KTQE), 1177-1221 (LRKL…GTWP), 1225-1272 (SGSC…GSYA), 1274-1318 (DGIC…RHVA), 1320-1363 (KGVC…GFYA), 1365-1411 (SRHC…GTYY), 1415-1461 (TKEC…SEYW), 1465-1510 (APGC…GYYA), 1514-1559 (SNRC…GYYA), 1563-1610 (TGRC…HYYV), 1614-1659 (TQTC…GEYR), and 1665-1712 (KFNC…SDPP). The segment at 636-1727 (CDPECSEVGC…CDCQDTTDEC (1092 aa)) is CRM (Cys-rich motif). Residue Asn-665 is glycosylated (N-linked (GlcNAc...) asparagine). N-linked (GlcNAc...) asparagine glycans are attached at residues Asn-752, Asn-802, and Asn-852. Residues 869–913 (MGAICKDGEYVDEHGHCQTCEASCAKCQGPTQEDCTTCPMTRIFD) form the PLAC domain. Asn-1014 carries N-linked (GlcNAc...) asparagine glycosylation. Asn-1191 carries an N-linked (GlcNAc...) asparagine glycan. The N-linked (GlcNAc...) asparagine glycan is linked to Asn-1290. The N-linked (GlcNAc...) asparagine glycan is linked to Asn-1497. Residues Asn-1685 and Asn-1707 are each glycosylated (N-linked (GlcNAc...) asparagine). The chain crosses the membrane as a helical span at residues 1744–1764 (ALFITSSMMLVLLLGAAVVVW). Residues 1765–1860 (KKSRGRVQPA…YDDESYSYYQ (96 aa)) are Cytoplasmic-facing. 2 AC regions span residues 1807–1826 (VIEY…IVYM) and 1838–1860 (YGLL…SYYQ).

This sequence belongs to the peptidase S8 family. Expressed in T-lymphocytes.

The protein localises to the secreted. It is found in the endomembrane system. In terms of biological role, serine endoprotease that processes various proproteins by cleavage at paired basic amino acids, recognizing the RXXX[KR]R consensus motif. Likely functions in the constitutive and regulated secretory pathways. Plays an essential role in pregnancy establishment by proteolytic activation of a number of important factors such as BMP2, CALD1 and alpha-integrins. This chain is Proprotein convertase subtilisin/kexin type 5 (PCSK5), found in Homo sapiens (Human).